A 255-amino-acid chain; its full sequence is Imidazole glycerol phosphate synthase subunit HisF (255 aa).

Residues Asp12 and Asp131 contribute to the active site.

This sequence belongs to the HisA/HisF family. Heterodimer of HisH and HisF.

Its subcellular location is the cytoplasm. It catalyses the reaction 5-[(5-phospho-1-deoxy-D-ribulos-1-ylimino)methylamino]-1-(5-phospho-beta-D-ribosyl)imidazole-4-carboxamide + L-glutamine = D-erythro-1-(imidazol-4-yl)glycerol 3-phosphate + 5-amino-1-(5-phospho-beta-D-ribosyl)imidazole-4-carboxamide + L-glutamate + H(+). It functions in the pathway amino-acid biosynthesis; L-histidine biosynthesis; L-histidine from 5-phospho-alpha-D-ribose 1-diphosphate: step 5/9. Its function is as follows. IGPS catalyzes the conversion of PRFAR and glutamine to IGP, AICAR and glutamate. The HisF subunit catalyzes the cyclization activity that produces IGP and AICAR from PRFAR using the ammonia provided by the HisH subunit. The sequence is that of Imidazole glycerol phosphate synthase subunit HisF from Zymomonas mobilis subsp. mobilis (strain ATCC 31821 / ZM4 / CP4).